The primary structure comprises 328 residues: Ferredoxin--NADP reductase 1 (328 aa).

FAD-binding residues include glutamate 37, lysine 45, tyrosine 49, valine 89, and threonine 310.

Belongs to the ferredoxin--NADP reductase type 2 family. Homodimer. It depends on FAD as a cofactor.

The catalysed reaction is 2 reduced [2Fe-2S]-[ferredoxin] + NADP(+) + H(+) = 2 oxidized [2Fe-2S]-[ferredoxin] + NADPH. The sequence is that of Ferredoxin--NADP reductase 1 from Latilactobacillus sakei subsp. sakei (strain 23K) (Lactobacillus sakei subsp. sakei).